The primary structure comprises 115 residues: Replication initiation control protein YabA (115 aa).

Residues His-90, Cys-92, Cys-106, and Cys-109 each coordinate Zn(2+).

This sequence belongs to the YabA family. As to quaternary structure, homotetramer. Interacts with both DnaA and DnaN, acting as a bridge between these two proteins. It depends on Zn(2+) as a cofactor.

The protein localises to the cytoplasm. The protein resides in the nucleoid. Involved in control of chromosome replication initiation. Inhibits the cooperative binding of DnaA to the oriC region, thus negatively regulating initiation of chromosome replication. Inhibits the ability of DnaA-ATP to form a helix on DNA; does not disassemble preformed DnaA-DNA helices. Decreases the residence time of DnaA on the chromosome at its binding sites (oriC, replication forks and promoter-binding sites). Tethers DnaA to the replication machinery via the DNA polymerase beta sliding clamp subunit (dnaN). Associates with oriC and other DnaA targets on the chromosome in a DnaA-dependent manner. The chain is Replication initiation control protein YabA from Staphylococcus epidermidis (strain ATCC 35984 / DSM 28319 / BCRC 17069 / CCUG 31568 / BM 3577 / RP62A).